Reading from the N-terminus, the 181-residue chain is Large ribosomal subunit protein uL5 (181 aa).

Belongs to the universal ribosomal protein uL5 family. In terms of assembly, part of the 50S ribosomal subunit; part of the 5S rRNA/L5/L18/L25 subcomplex. Contacts the 5S rRNA and the P site tRNA. Forms a bridge to the 30S subunit in the 70S ribosome.

Functionally, this is one of the proteins that bind and probably mediate the attachment of the 5S RNA into the large ribosomal subunit, where it forms part of the central protuberance. In the 70S ribosome it contacts protein S13 of the 30S subunit (bridge B1b), connecting the 2 subunits; this bridge is implicated in subunit movement. Contacts the P site tRNA; the 5S rRNA and some of its associated proteins might help stabilize positioning of ribosome-bound tRNAs. This Helicobacter pylori (strain ATCC 700392 / 26695) (Campylobacter pylori) protein is Large ribosomal subunit protein uL5.